A 361-amino-acid chain; its full sequence is Peptide chain release factor 1 (361 aa).

Residue glutamine 236 is modified to N5-methylglutamine.

Belongs to the prokaryotic/mitochondrial release factor family. In terms of processing, methylated by PrmC. Methylation increases the termination efficiency of RF1.

It is found in the cytoplasm. Functionally, peptide chain release factor 1 directs the termination of translation in response to the peptide chain termination codons UAG and UAA. The sequence is that of Peptide chain release factor 1 from Lactobacillus delbrueckii subsp. bulgaricus (strain ATCC BAA-365 / Lb-18).